The primary structure comprises 188 residues: Elongation factor P (188 aa).

The protein belongs to the elongation factor P family.

The protein resides in the cytoplasm. The protein operates within protein biosynthesis; polypeptide chain elongation. Involved in peptide bond synthesis. Stimulates efficient translation and peptide-bond synthesis on native or reconstituted 70S ribosomes in vitro. Probably functions indirectly by altering the affinity of the ribosome for aminoacyl-tRNA, thus increasing their reactivity as acceptors for peptidyl transferase. The chain is Elongation factor P from Rhodopseudomonas palustris (strain TIE-1).